Reading from the N-terminus, the 310-residue chain is Quinolinate synthase (310 aa).

Residues H27 and S44 each contribute to the iminosuccinate site. Residue C89 participates in [4Fe-4S] cluster binding. Iminosuccinate-binding positions include 115–117 and S132; that span reads YVN. C175 is a [4Fe-4S] cluster binding site. Residues 201-203 and T222 each bind iminosuccinate; that span reads HPE. C267 contributes to the [4Fe-4S] cluster binding site.

It belongs to the quinolinate synthase family. Type 2 subfamily. [4Fe-4S] cluster is required as a cofactor.

The protein resides in the cytoplasm. The enzyme catalyses iminosuccinate + dihydroxyacetone phosphate = quinolinate + phosphate + 2 H2O + H(+). It functions in the pathway cofactor biosynthesis; NAD(+) biosynthesis; quinolinate from iminoaspartate: step 1/1. Functionally, catalyzes the condensation of iminoaspartate with dihydroxyacetone phosphate to form quinolinate. This chain is Quinolinate synthase, found in Thermus thermophilus (strain ATCC BAA-163 / DSM 7039 / HB27).